Reading from the N-terminus, the 342-residue chain is Tetraacyldisaccharide 4'-kinase (342 aa).

68–75 (TVGGTGKT) serves as a coordination point for ATP.

This sequence belongs to the LpxK family.

The enzyme catalyses a lipid A disaccharide + ATP = a lipid IVA + ADP + H(+). It functions in the pathway glycolipid biosynthesis; lipid IV(A) biosynthesis; lipid IV(A) from (3R)-3-hydroxytetradecanoyl-[acyl-carrier-protein] and UDP-N-acetyl-alpha-D-glucosamine: step 6/6. In terms of biological role, transfers the gamma-phosphate of ATP to the 4'-position of a tetraacyldisaccharide 1-phosphate intermediate (termed DS-1-P) to form tetraacyldisaccharide 1,4'-bis-phosphate (lipid IVA). In Burkholderia cenocepacia (strain HI2424), this protein is Tetraacyldisaccharide 4'-kinase.